The following is a 67-amino-acid chain: MKAKDIRKKSQEELQKELVELKAELFKLRFQHATNQLENPMKLRDVKKSIARIKTVLRERELKGIEV.

The protein belongs to the universal ribosomal protein uL29 family.

In Acetivibrio thermocellus (strain ATCC 27405 / DSM 1237 / JCM 9322 / NBRC 103400 / NCIMB 10682 / NRRL B-4536 / VPI 7372) (Clostridium thermocellum), this protein is Large ribosomal subunit protein uL29.